Reading from the N-terminus, the 73-residue chain is Putative neurotoxin NaH-Cpp1a (73 aa).

The first 23 residues, Met-1–Ser-23, serve as a signal peptide directing secretion. 3 cysteine pairs are disulfide-bonded: Cys-43/Cys-58, Cys-50/Cys-63, and Cys-57/Cys-70.

As to expression, expressed outside of acontia.

The protein localises to the secreted. The protein resides in the nematocyst. Putative neurotoxin. The sequence is that of Putative neurotoxin NaH-Cpp1a from Calliactis polypus (Hermit crab anemone).